A 274-amino-acid chain; its full sequence is uncharacterized protein (274 aa).

This sequence belongs to the PhoU family.

This is an uncharacterized protein from Deinococcus radiodurans (strain ATCC 13939 / DSM 20539 / JCM 16871 / CCUG 27074 / LMG 4051 / NBRC 15346 / NCIMB 9279 / VKM B-1422 / R1).